Reading from the N-terminus, the 207-residue chain is Small ribosomal subunit protein uS4 (207 aa).

Residues 31-55 are disordered; it reads KCKLDSKPGQHGRTSGARTSDYGTQ. Polar residues predominate over residues 42 to 53; that stretch reads GRTSGARTSDYG. One can recognise an S4 RNA-binding domain in the interval 97–160; the sequence is SRLDNVVYRM…KKQARIIEAL (64 aa).

Belongs to the universal ribosomal protein uS4 family. Part of the 30S ribosomal subunit. Contacts protein S5. The interaction surface between S4 and S5 is involved in control of translational fidelity.

Its function is as follows. One of the primary rRNA binding proteins, it binds directly to 16S rRNA where it nucleates assembly of the body of the 30S subunit. In terms of biological role, with S5 and S12 plays an important role in translational accuracy. The polypeptide is Small ribosomal subunit protein uS4 (Burkholderia vietnamiensis (strain G4 / LMG 22486) (Burkholderia cepacia (strain R1808))).